The chain runs to 495 residues: UDP-N-acetylmuramoyl-L-alanyl-D-glutamate--2,6-diaminopimelate ligase (495 aa).

Residues leucine 27, serine 29, and 44–46 (HQT) each bind UDP-N-acetyl-alpha-D-muramoyl-L-alanyl-D-glutamate. 116-122 (GTNGKTT) serves as a coordination point for ATP. Residues asparagine 157, 158-159 (TT), serine 185, glutamine 191, and arginine 193 each bind UDP-N-acetyl-alpha-D-muramoyl-L-alanyl-D-glutamate. The residue at position 225 (lysine 225) is an N6-carboxylysine. Meso-2,6-diaminopimelate-binding positions include arginine 390, 414 to 417 (DNPR), glycine 465, and glutamate 469. Residues 414-417 (DNPR) carry the Meso-diaminopimelate recognition motif motif.

The protein belongs to the MurCDEF family. MurE subfamily. It depends on Mg(2+) as a cofactor. In terms of processing, carboxylation is probably crucial for Mg(2+) binding and, consequently, for the gamma-phosphate positioning of ATP.

The protein resides in the cytoplasm. It catalyses the reaction UDP-N-acetyl-alpha-D-muramoyl-L-alanyl-D-glutamate + meso-2,6-diaminopimelate + ATP = UDP-N-acetyl-alpha-D-muramoyl-L-alanyl-gamma-D-glutamyl-meso-2,6-diaminopimelate + ADP + phosphate + H(+). The protein operates within cell wall biogenesis; peptidoglycan biosynthesis. Its function is as follows. Catalyzes the addition of meso-diaminopimelic acid to the nucleotide precursor UDP-N-acetylmuramoyl-L-alanyl-D-glutamate (UMAG) in the biosynthesis of bacterial cell-wall peptidoglycan. This chain is UDP-N-acetylmuramoyl-L-alanyl-D-glutamate--2,6-diaminopimelate ligase, found in Sodalis glossinidius (strain morsitans).